The chain runs to 300 residues: Protein THYLAKOID FORMATION 1, chloroplastic (300 aa).

The N-terminal 67 residues, 1 to 67 (MAATAISSLS…SNVTADVPPV (67 aa)), are a transit peptide targeting the chloroplast. At 68-196 (SETKSKFLKA…IAGRAGSKEG (129 aa)) the chain is on the chloroplast intermembrane side. Residues 197–219 (FSYSRFFAVGLFRLLELASATDP) traverse the membrane as a helical segment. The Cytoplasmic portion of the chain corresponds to 220 to 300 (TVLDKLCASL…NPSFLVERKS (81 aa)). Residues 239–268 (DLDVYRNLLSKLVQAKELLKEYVEREKKKQ) are a coiled coil.

It belongs to the THF1 family. As to quaternary structure, interacts with GPA1. Ubiquitous. Present at higher level in hypocotyls (at protein level). Ubiquitously expressed in all organs, in roots of both light-grown and dark-grown seedlings. Highly expressed in the root apical meristems.

It is found in the plastid. The protein localises to the chloroplast outer membrane. Its subcellular location is the chloroplast stroma. Its function is as follows. Involved in a dynamic process of vesicle-mediated thylakoid membrane biogenesis. Required for the normal organization of vesicles into mature thylakoid stacks and ultimately for leaf development. Also involved in a sugar-signaling mechanism in roots by mediating signaling between the plasma membrane and the plastid. Probably acts downstream of the plasma membrane-delimited heterotrimeric G-protein GPA1 in a D-glucose signaling pathway. The polypeptide is Protein THYLAKOID FORMATION 1, chloroplastic (THF1) (Arabidopsis thaliana (Mouse-ear cress)).